The chain runs to 194 residues: Dephospho-CoA kinase (194 aa).

A DPCK domain is found at 3-194 (TIGLTGGIGS…EQVDGFWGGL (192 aa)). 11–16 (GSGKST) provides a ligand contact to ATP.

The protein belongs to the CoaE family.

It is found in the cytoplasm. The enzyme catalyses 3'-dephospho-CoA + ATP = ADP + CoA + H(+). It functions in the pathway cofactor biosynthesis; coenzyme A biosynthesis; CoA from (R)-pantothenate: step 5/5. Functionally, catalyzes the phosphorylation of the 3'-hydroxyl group of dephosphocoenzyme A to form coenzyme A. This Corynebacterium jeikeium (strain K411) protein is Dephospho-CoA kinase.